A 670-amino-acid chain; its full sequence is Probable potassium transport system protein Kup 1 (670 aa).

The next 13 membrane-spanning stretches (helical) occupy residues 14 to 34 (GAGFIIAMGIVYGDIGTSPLY), 58 to 78 (LSLIIWTLTLITTVKYVWIAL), 101 to 121 (WLIIPAMIGGAALLSDGALTP), 147 to 167 (LPIVIITLAILAVLFLIQRFG), 175 to 195 (FGPVMFIWFSFLGITGLINLF), 196 to 216 (GDFSVLQAINPYWAIHLLLSP), 220 to 240 (AGIFVLGSVFLATTGAEALYS), 252 to 272 (VSWPFVKVCIILSYCGQGAWL), 294 to 314 (LIIFSVILATLAAIIASQALI), 345 to 365 (LYIPAVNLGLWLAASFIVVYF), 374 to 394 (AYGLAITVTMLMTTTLLTVYL), 403 to 423 (VLVGLFFTVFIFIEGLFFAAS), and 427 to 447 (FMHGGYVVVIIAAMILFVMAI).

It belongs to the HAK/KUP transporter (TC 2.A.72) family.

The protein localises to the cell membrane. The enzyme catalyses K(+)(in) + H(+)(in) = K(+)(out) + H(+)(out). In terms of biological role, transport of potassium into the cell. Likely operates as a K(+):H(+) symporter. This is Probable potassium transport system protein Kup 1 from Lactococcus lactis subsp. lactis (strain IL1403) (Streptococcus lactis).